Here is a 147-residue protein sequence, read N- to C-terminus: Large ribosomal subunit protein uL15 (147 aa).

Residues Met1–Arg47 are disordered. Positions Thr23 to Gln35 are enriched in gly residues.

The protein belongs to the universal ribosomal protein uL15 family. As to quaternary structure, part of the 50S ribosomal subunit.

Functionally, binds to the 23S rRNA. The protein is Large ribosomal subunit protein uL15 of Clostridioides difficile (strain 630) (Peptoclostridium difficile).